The chain runs to 239 residues: Serine protease SplC (239 aa).

An N-terminal signal peptide occupies residues M1 to A36. Residues H75, D113, and S193 each act as charge relay system in the active site.

It belongs to the peptidase S1B family.

It is found in the secreted. The sequence is that of Serine protease SplC (splC) from Staphylococcus aureus (strain MSSA476).